Reading from the N-terminus, the 40-residue chain is Chaperonin HSP60, mitochondrial (40 aa).

The protein belongs to the chaperonin (HSP60) family.

The protein resides in the mitochondrion. Functionally, implicated in mitochondrial protein import and macromolecular assembly. May facilitate the correct folding of imported proteins. May also prevent misfolding and promote the refolding and proper assembly of unfolded polypeptides generated under stress conditions in the mitochondrial matrix. The polypeptide is Chaperonin HSP60, mitochondrial (Solanum tuberosum (Potato)).